The following is a 111-amino-acid chain: Ig kappa chain V region 3368 (111 aa).

Residues 1–24 (ADIVMTQTPSSVSAAVGGTVTIKC) are framework-1. The interval 25 to 35 (QASESIGNELA) is complementarity-determining-1. A framework-2 region spans residues 36 to 50 (WYQQKPGQPPKLLIY). Positions 51–57 (RASKLAS) are complementarity-determining-2. Residues 58–89 (GVSSRFKGSGSGTEFTLTISGVQCDDAGIYYC) are framework-3. The tract at residues 90–101 (QQDWNSNNVVNN) is complementarity-determining-3. The segment at 102–111 (FGGGTEVVVK) is framework-4.

The protein is Ig kappa chain V region 3368 of Oryctolagus cuniculus (Rabbit).